A 405-amino-acid chain; its full sequence is Endo-1,4-beta-xylanase 5 (405 aa).

The N-terminal stretch at 1-22 is a signal peptide; that stretch reads MTRLATLITLAGLLAVSPGAYA. N-linked (GlcNAc...) asparagine glycans are attached at residues N27 and N69. One can recognise a GH10 domain in the interval 32–352; the sequence is STGAEGLNSL…KPAYTSVSSL (321 aa). E166 acts as the Proton donor in catalysis. N-linked (GlcNAc...) asparagine glycosylation is present at N171. The active-site Nucleophile is the E273. C302 and C308 are disulfide-bonded. G380 is lipidated: GPI-anchor amidated glycine. Residues 381 to 405 constitute a propeptide, removed in mature form; it reads AGRETVSIAGLTLALSSLAFGMFML.

Belongs to the glycosyl hydrolase 10 (cellulase F) family.

The protein resides in the cell membrane. Its subcellular location is the secreted. It catalyses the reaction Endohydrolysis of (1-&gt;4)-beta-D-xylosidic linkages in xylans.. Its pathway is glycan degradation; xylan degradation. Its function is as follows. Endo-1,4-beta-xylanase involved in the hydrolysis of xylan, a major structural heterogeneous polysaccharide found in plant biomass representing the second most abundant polysaccharide in the biosphere, after cellulose. This is Endo-1,4-beta-xylanase 5 (XYL5) from Pyricularia grisea (Crabgrass-specific blast fungus).